Consider the following 512-residue polypeptide: Cobyric acid synthase (512 aa).

One can recognise a GATase cobBQ-type domain in the interval A251 to F451. Catalysis depends on C332, which acts as the Nucleophile. H443 is an active-site residue.

It belongs to the CobB/CobQ family. CobQ subfamily.

Its pathway is cofactor biosynthesis; adenosylcobalamin biosynthesis. In terms of biological role, catalyzes amidations at positions B, D, E, and G on adenosylcobyrinic A,C-diamide. NH(2) groups are provided by glutamine, and one molecule of ATP is hydrogenolyzed for each amidation. This is Cobyric acid synthase from Photorhabdus laumondii subsp. laumondii (strain DSM 15139 / CIP 105565 / TT01) (Photorhabdus luminescens subsp. laumondii).